Reading from the N-terminus, the 748-residue chain is Polyribonucleotide nucleotidyltransferase (748 aa).

2 residues coordinate Mg(2+): Asp-487 and Asp-493. Residues 554–613 (PSTTTIKIDKDKIRDIIGPGGKVIKEICETSGAKIDISDDGTVSVYASDRDKLKVALDKI) form the KH domain. In terms of domain architecture, S1 motif spans 623-691 (GEIFNGTVVK…NKGKAKLTIK (69 aa)). The segment at 695–733 (KDKFSNNTKPKTSVNNTKDNSEPEQRHDSSKKRAWNEDN) is disordered. The span at 699 to 712 (SNNTKPKTSVNNTK) shows a compositional bias: polar residues. Basic and acidic residues predominate over residues 713–722 (DNSEPEQRHD).

The protein belongs to the polyribonucleotide nucleotidyltransferase family. Mg(2+) serves as cofactor.

Its subcellular location is the cytoplasm. The catalysed reaction is RNA(n+1) + phosphate = RNA(n) + a ribonucleoside 5'-diphosphate. Its function is as follows. Involved in mRNA degradation. Catalyzes the phosphorolysis of single-stranded polyribonucleotides processively in the 3'- to 5'-direction. This Rickettsia rickettsii (strain Iowa) protein is Polyribonucleotide nucleotidyltransferase.